Here is a 466-residue protein sequence, read N- to C-terminus: Gamma-aminobutyric acid receptor subunit gamma-2 (466 aa).

Residues 1–38 (MSSPNTWSTGSTVYSPVFSQKMTLWILLLLSLYPGFTS) form the signal peptide. The Extracellular segment spans residues 39–274 (QKSDDDYEDY…FDLSRRMGYF (236 aa)). N-linked (GlcNAc...) asparagine glycosylation is found at N51 and N128. C189 and C203 form a disulfide bridge. A glycan (N-linked (GlcNAc...) asparagine) is linked at N246. Residues 275–295 (TIQTYIPCTLIVVLSWVSFWI) form a helical membrane-spanning segment. Over 296-301 (NKDAVP) the chain is Cytoplasmic. The chain crosses the membrane as a helical span at residues 302-321 (ARTSLGITTVLTMTTLSTIA). Over 322–333 (RKSLPKVSYVTA) the chain is Extracellular. The chain crosses the membrane as a helical span at residues 334–358 (MDLFVSVCFIFVFSALVEYGTLHYF). The Cytoplasmic portion of the chain corresponds to 359-442 (VSNRKPSKDK…IHIRIAKMDS (84 aa)). A helical transmembrane segment spans residues 443-463 (YARIFFPTAFCLFNLVYWVSY). Topologically, residues 464–466 (LYL) are extracellular.

This sequence belongs to the ligand-gated ion channel (TC 1.A.9) family. Gamma-aminobutyric acid receptor (TC 1.A.9.5) subfamily. GABRG2 sub-subfamily. In terms of assembly, heteropentamer, formed by a combination of alpha (GABRA1-6), beta (GABRB1-3), gamma (GABRG1-3), delta (GABRD), epsilon (GABRE), rho (GABRR1-3), pi (GABRP) and theta (GABRQ) chains, each subunit exhibiting distinct physiological and pharmacological properties. Interacts with GABARAP. Interacts with KIF21B. Identified in a complex of 720 kDa composed of LHFPL4, NLGN2, GABRA1, GABRB2, GABRG2 and GABRB3. Interacts with LHFPL4. Interacts with SHISA7; interaction leads to the regulation of GABA(A) receptor trafficking, channel deactivation kinetics and pharmacology. In terms of processing, palmitoylated by ZDHHC3/GODZ; required for the accumulation of GABA(A) receptors at the postsynaptic membrane of inhibitory GABAergic synapses. Post-translationally, glycosylated. As to expression, expressed in brain (at protein level). Expressed in lungs, in alveolar epithelium.

The protein resides in the postsynaptic cell membrane. The protein localises to the cell membrane. It localises to the cell projection. Its subcellular location is the dendrite. It is found in the cytoplasmic vesicle membrane. The enzyme catalyses chloride(in) = chloride(out). With respect to regulation, allosterically activated by benzodiazepines. Activated by pentobarbital. Inhibited by the antagonist bicuculline. Inhibited by zinc ions. Potentiated by histamine. Gamma subunit of the heteropentameric ligand-gated chloride channel gated by gamma-aminobutyric acid (GABA), a major inhibitory neurotransmitter in the brain. GABA-gated chloride channels, also named GABA(A) receptors (GABAAR), consist of five subunits arranged around a central pore and contain GABA active binding site(s) located at the alpha and beta subunit interface(s). When activated by GABA, GABAARs selectively allow the flow of chloride anions across the cell membrane down their electrochemical gradient. Gamma-2/GABRG2-containing GABAARs are found at both synaptic and extrasynaptic sites. Chloride influx into the postsynaptic neuron following GABAAR opening decreases the neuron ability to generate a new action potential, thereby reducing nerve transmission. GABAARs containing alpha-1 and beta-2 or -3 subunits exhibit synaptogenic activity; the gamma-2 subunit being necessary but not sufficient to induce rapid synaptic contacts formation. Extrasynaptic gamma-2-containing receptors contribute to the tonic GABAergic inhibition. GABAARs function also as histamine receptor where histamine binds at the interface of two neighboring beta subunits and potentiates GABA response in a gamma-2 subunit-controlled manner. The sequence is that of Gamma-aminobutyric acid receptor subunit gamma-2 from Rattus norvegicus (Rat).